A 792-amino-acid polypeptide reads, in one-letter code: RNA-binding protein RRM4 (792 aa).

The interval Thr37–Val60 is disordered. RRM domains are found at residues Pro72 to Ser145, Lys154 to Ala235, and Cys321 to Pro398. Residues Ala412 to Ser424 show a composition bias toward low complexity. Disordered regions lie at residues Ala412 to Arg438 and Asp630 to Pro649. Positions Arg640–Pro649 are enriched in polar residues. The PABC domain maps to Ala715 to Lys792.

The protein belongs to the polyadenylate-binding protein type-1 family. As to quaternary structure, part of large ribonucleoprotein complexes (mRNPs) containing RNA-binding proteins RRM4 and PAB1, endosome-binding protein UPA1, core scaffold protein UPA2 and associated factor GRP1. Interacts (via PABC domain) with UPA1 (via PAM2 domain).

The protein localises to the cytoplasm. Its subcellular location is the cytoskeleton. It localises to the endosome. In terms of biological role, key RNA-binding protein involved in the formation of polar-growing hyphae which is essential for infection by the plant pathogen. During filamentation, assembles into particles that shuttle bidirectionally along microtubules to both poles. The RRM4 transport particles are part of the endosomal mRNP transport that regulates polarity of the infectious hyphae by transporting distinct mRNAs encoding, for example, the ubiquitin fusion protein UBI1, the small G protein RHO3, or the septin CDC3, from the nucleus to cell poles. Recognizes a broad spectrum of cargo mRNAs and precisely binds at stop codons, which constitute landmark sites of translation, suggesting an intimate connection of mRNA transport and translation. Also binds to the specific binding motif UAUG of cargo mRNAs via its third RRM. Plus-end-directed KIN3, a kinesin-3 type motor, mediates anterograde transport of RRM4-containing mRNPs whereas split dynein DYM1-DYN2 functions in retrograde movement of mRNPs. This is RNA-binding protein RRM4 from Mycosarcoma maydis (Corn smut fungus).